The following is a 160-amino-acid chain: MGTLDTKGFTEEQEALVVKSWNAMKKNSAELGLKLFLKIFEIAPSAQKLFSFLKDSKVPLEQNTKLKPHAMSVFLMTCESAVQLRKSGKVTVRESSLKKLGANHFKYGVVDEHFEVTKFALLETIKEAVPEMWSPAMKNAWGEAYDQLVNAIKSEMKPSS.

A Globin domain is found at 8–157; it reads GFTEEQEALV…LVNAIKSEMK (150 aa). The Homodimerization motif lies at 41–45; the sequence is EIAPS. S51, K65, H69, K99, and H104 together coordinate heme b. The Homodimerization signature appears at 111-123; it reads DEHFEVTKFALLE.

Belongs to the plant globin family. As to quaternary structure, homodimer. Heme b is required as a cofactor. As to expression, root specific.

The protein localises to the nucleus matrix. The protein resides in the cytoplasm. The enzyme catalyses Fe(III)-heme b-[protein] + nitric oxide + H2O = Fe(II)-heme b-[protein] + nitrite + 2 H(+). In terms of biological role, phytoglobin that reduces nitrite to nitric oxide (NO) under anoxic conditions (e.g. during flooding or in waterlogged soil) and upon root nodulation. Required for general plant development and during nodulation, especially for the onset of symbiosis. Monitors nitric oxide (NO) levels during early phase of the nitrogen-fixing symbiosis and buffers oxygen in functioning nodules. May not function as an oxygen storage or transport protein. Has an unusually high affinity for O(2) through a hexacoordinate heme iron because of a very low dissociation constant. This is Anaerobic nitrite reductase MHB1 from Medicago sativa (Alfalfa).